Reading from the N-terminus, the 264-residue chain is Thymidylate synthase (264 aa).

Arginine 21 lines the dUMP pocket. (6R)-5,10-methylene-5,6,7,8-tetrahydrofolate is bound at residue histidine 51. 126-127 (RR) contributes to the dUMP binding site. The active-site Nucleophile is cysteine 146. DUMP is bound by residues 166–169 (RSCD), asparagine 177, and 207–209 (HLY). Aspartate 169 contributes to the (6R)-5,10-methylene-5,6,7,8-tetrahydrofolate binding site. Alanine 263 is a (6R)-5,10-methylene-5,6,7,8-tetrahydrofolate binding site.

The protein belongs to the thymidylate synthase family. Bacterial-type ThyA subfamily. In terms of assembly, homodimer.

It localises to the cytoplasm. The catalysed reaction is dUMP + (6R)-5,10-methylene-5,6,7,8-tetrahydrofolate = 7,8-dihydrofolate + dTMP. Its pathway is pyrimidine metabolism; dTTP biosynthesis. Catalyzes the reductive methylation of 2'-deoxyuridine-5'-monophosphate (dUMP) to 2'-deoxythymidine-5'-monophosphate (dTMP) while utilizing 5,10-methylenetetrahydrofolate (mTHF) as the methyl donor and reductant in the reaction, yielding dihydrofolate (DHF) as a by-product. This enzymatic reaction provides an intracellular de novo source of dTMP, an essential precursor for DNA biosynthesis. The chain is Thymidylate synthase from Shewanella oneidensis (strain ATCC 700550 / JCM 31522 / CIP 106686 / LMG 19005 / NCIMB 14063 / MR-1).